We begin with the raw amino-acid sequence, 348 residues long: Dihydroorotase (348 aa).

The Zn(2+) site is built by His17 and His19. Substrate-binding positions include 19–21 (HLR) and Asn45. Zn(2+) is bound by residues Lys103, His140, and His178. Lys103 bears the N6-carboxylysine mark. His140 is a substrate binding site. Leu223 provides a ligand contact to substrate. Asp251 contributes to the Zn(2+) binding site. Asp251 is a catalytic residue. Substrate-binding residues include His255 and Ala267.

Belongs to the metallo-dependent hydrolases superfamily. DHOase family. Class II DHOase subfamily. Homodimer. Requires Zn(2+) as cofactor.

It carries out the reaction (S)-dihydroorotate + H2O = N-carbamoyl-L-aspartate + H(+). It functions in the pathway pyrimidine metabolism; UMP biosynthesis via de novo pathway; (S)-dihydroorotate from bicarbonate: step 3/3. In terms of biological role, catalyzes the reversible cyclization of carbamoyl aspartate to dihydroorotate. This is Dihydroorotase from Escherichia coli O7:K1 (strain IAI39 / ExPEC).